The following is a 413-amino-acid chain: Hibernation-specific plasma protein HP-55 (413 aa).

The first 24 residues, M1–A24, serve as a signal peptide directing secretion. Q25 is subject to Pyrrolidone carboxylic acid. N-linked (GlcNAc...) asparagine glycosylation is found at N65, N102, N165, and N266. Residues G368 to R387 are RCL.

The protein belongs to the serpin family. As to quaternary structure, plasma proteins HP-20, HP-25, HP-27 and HP-55 form a 140 kDa complex via disulfide bonds in the plasma. The N-terminus is blocked. As to expression, plasma; synthesized in the liver.

It localises to the secreted. Its function is as follows. Protease inhibitor. The chain is Hibernation-specific plasma protein HP-55 from Tamias sibiricus (Siberian chipmunk).